The chain runs to 726 residues: Putative RNA polymerase II subunit B1 CTD phosphatase RPAP2 homolog (726 aa).

The RTR1-type zinc finger occupies 43–131; that stretch reads AAASLLSGPD…LPPDRPFGVS (89 aa). Positions 66, 71, 107, and 111 each coordinate Zn(2+). Over residues 209–218 the composition is skewed to basic and acidic residues; sequence VGGPKKEAKQ. Disordered stretches follow at residues 209-242 and 294-323; these read VGGP…SGES and KKDK…GRDG. Polar residues predominate over residues 220–241; that stretch reads DACSAEQSSNINVDSRNASSGE.

Belongs to the RPAP2 family.

It is found in the nucleus. It carries out the reaction O-phospho-L-seryl-[protein] + H2O = L-seryl-[protein] + phosphate. The enzyme catalyses O-phospho-L-threonyl-[protein] + H2O = L-threonyl-[protein] + phosphate. Its function is as follows. Putative RNA polymerase II subunit B1 C-terminal domain (CTD) phosphatase involved in RNA polymerase II transcription regulation. This chain is Putative RNA polymerase II subunit B1 CTD phosphatase RPAP2 homolog, found in Oryza sativa subsp. japonica (Rice).